The following is a 395-amino-acid chain: MAGQGSVRLTRKSDNVVIIEKDLATEEMVLSMGPQHPSTHGVLRLECRTDGEVVTEAEPYLGYLHRCFEKYCENVDYPAIVPYTDRMDYLAGMNSEMAYAIAVEKLLDIEIPRRVEFIRVIVSELNRIASHLVAIGTYAIDLGAFTPFLFCFRDREHILNMLEWASGARMLYNYIWIGGLAYDVPADFQKRVGEFVDYFRPKALELSRLLTENEIFVKRTKGIGIMPADVAINYGWSGPMLRGSGVQWDLRRNDPYSIYPELDFAVPVPDGKFSDVGDCLSRHLVRALEIEESLKIIEQCIEKMPSAEGFDPRAAVPKRIRPKAGEVYARAENPRGELGFYILSDGKSTSPVRCKARSSCFVNLSAMKDLSKGQLIPDLVAIIGSIDIVLGEVDR.

It belongs to the complex I 49 kDa subunit family. In terms of assembly, NDH-1 is composed of 14 different subunits. Subunits NuoB, C, D, E, F, and G constitute the peripheral sector of the complex.

It localises to the cell inner membrane. The enzyme catalyses a quinone + NADH + 5 H(+)(in) = a quinol + NAD(+) + 4 H(+)(out). Functionally, NDH-1 shuttles electrons from NADH, via FMN and iron-sulfur (Fe-S) centers, to quinones in the respiratory chain. The immediate electron acceptor for the enzyme in this species is believed to be a menaquinone. Couples the redox reaction to proton translocation (for every two electrons transferred, four hydrogen ions are translocated across the cytoplasmic membrane), and thus conserves the redox energy in a proton gradient. The polypeptide is NADH-quinone oxidoreductase subunit D (Chlorobium luteolum (strain DSM 273 / BCRC 81028 / 2530) (Pelodictyon luteolum)).